The chain runs to 267 residues: B3 domain-containing protein At3g11580 (267 aa).

A DNA-binding region (TF-B3) is located at residues 29–143 (FEKSLTPSDV…RLFIGWRRRG (115 aa)).

The protein localises to the nucleus. The sequence is that of B3 domain-containing protein At3g11580 (ARF32) from Arabidopsis thaliana (Mouse-ear cress).